Reading from the N-terminus, the 296-residue chain is Acetylglutamate kinase (296 aa).

Substrate contacts are provided by residues 67–68, R89, and N194; that span reads GG.

This sequence belongs to the acetylglutamate kinase family. ArgB subfamily.

The protein localises to the cytoplasm. The catalysed reaction is N-acetyl-L-glutamate + ATP = N-acetyl-L-glutamyl 5-phosphate + ADP. It participates in amino-acid biosynthesis; L-arginine biosynthesis; N(2)-acetyl-L-ornithine from L-glutamate: step 2/4. Its function is as follows. Catalyzes the ATP-dependent phosphorylation of N-acetyl-L-glutamate. The chain is Acetylglutamate kinase from Brucella canis (strain ATCC 23365 / NCTC 10854 / RM-666).